The chain runs to 872 residues: Alanine--tRNA ligase (872 aa).

Residues histidine 567, histidine 571, cysteine 669, and histidine 673 each coordinate Zn(2+).

The protein belongs to the class-II aminoacyl-tRNA synthetase family. The cofactor is Zn(2+).

The protein localises to the cytoplasm. The catalysed reaction is tRNA(Ala) + L-alanine + ATP = L-alanyl-tRNA(Ala) + AMP + diphosphate. Catalyzes the attachment of alanine to tRNA(Ala) in a two-step reaction: alanine is first activated by ATP to form Ala-AMP and then transferred to the acceptor end of tRNA(Ala). Also edits incorrectly charged Ser-tRNA(Ala) and Gly-tRNA(Ala) via its editing domain. This chain is Alanine--tRNA ligase, found in Streptococcus pyogenes serotype M5 (strain Manfredo).